Reading from the N-terminus, the 213-residue chain is Superoxide dismutase [Fe] (213 aa).

Fe cation-binding residues include His26, His73, Asp156, and His160.

It belongs to the iron/manganese superoxide dismutase family. As to quaternary structure, homodimer. The cofactor is Fe cation.

It carries out the reaction 2 superoxide + 2 H(+) = H2O2 + O2. Functionally, destroys superoxide anion radicals which are normally produced within the cells and which are toxic to biological systems. This Helicobacter pylori (strain ATCC 700392 / 26695) (Campylobacter pylori) protein is Superoxide dismutase [Fe] (sodB).